A 184-amino-acid chain; its full sequence is Small ribosomal subunit protein eS8 (184 aa).

Residues 1–23 are disordered; it reads MGISRDSRHKRRLTGGRYPVHKK. Basic residues predominate over residues 7 to 23; the sequence is SRHKRRLTGGRYPVHKK.

This sequence belongs to the eukaryotic ribosomal protein eS8 family.

This is Small ribosomal subunit protein eS8 (RPS8) from Theileria annulata.